The sequence spans 869 residues: Bifunctional uridylyltransferase/uridylyl-removing enzyme (869 aa).

Residues 1 to 332 (MTDTPAERPD…QFDGEATPEP (332 aa)) form a uridylyltransferase region. Residues 333–691 (LGGGFSLRRG…RRAVPDNDAL (359 aa)) are uridylyl-removing. The 123-residue stretch at 450–572 (VDQHTLMVLR…VGTRERLDYL (123 aa)) folds into the HD domain. 2 consecutive ACT domains span residues 692 to 774 (EVFV…RAVP) and 798 to 869 (RISL…LDPV).

This sequence belongs to the GlnD family. The cofactor is Mg(2+).

The catalysed reaction is [protein-PII]-L-tyrosine + UTP = [protein-PII]-uridylyl-L-tyrosine + diphosphate. The enzyme catalyses [protein-PII]-uridylyl-L-tyrosine + H2O = [protein-PII]-L-tyrosine + UMP + H(+). Uridylyltransferase (UTase) activity is inhibited by glutamine, while glutamine activates uridylyl-removing (UR) activity. In terms of biological role, modifies, by uridylylation and deuridylylation, the PII regulatory proteins (GlnB and homologs), in response to the nitrogen status of the cell that GlnD senses through the glutamine level. Under low glutamine levels, catalyzes the conversion of the PII proteins and UTP to PII-UMP and PPi, while under higher glutamine levels, GlnD hydrolyzes PII-UMP to PII and UMP (deuridylylation). Thus, controls uridylylation state and activity of the PII proteins, and plays an important role in the regulation of nitrogen assimilation and metabolism. This Xanthomonas axonopodis pv. citri (strain 306) protein is Bifunctional uridylyltransferase/uridylyl-removing enzyme.